A 257-amino-acid chain; its full sequence is uncharacterized protein (257 aa).

A helical membrane pass occupies residues 7–27 (IGILEIVVILSILITSVSLAY).

The protein localises to the membrane. This is an uncharacterized protein from Methanocaldococcus jannaschii (strain ATCC 43067 / DSM 2661 / JAL-1 / JCM 10045 / NBRC 100440) (Methanococcus jannaschii).